A 92-amino-acid polypeptide reads, in one-letter code: Small ribosomal subunit protein uS19c (92 aa).

Belongs to the universal ribosomal protein uS19 family.

Its subcellular location is the plastid. The protein localises to the chloroplast. Protein S19 forms a complex with S13 that binds strongly to the 16S ribosomal RNA. In Illicium oligandrum (Star anise), this protein is Small ribosomal subunit protein uS19c.